Reading from the N-terminus, the 242-residue chain is Ubiquinone biosynthesis O-methyltransferase (242 aa).

S-adenosyl-L-methionine-binding residues include Arg-44, Gly-64, Asp-85, and Met-129.

This sequence belongs to the methyltransferase superfamily. UbiG/COQ3 family.

The enzyme catalyses a 3-demethylubiquinol + S-adenosyl-L-methionine = a ubiquinol + S-adenosyl-L-homocysteine + H(+). It catalyses the reaction a 3-(all-trans-polyprenyl)benzene-1,2-diol + S-adenosyl-L-methionine = a 2-methoxy-6-(all-trans-polyprenyl)phenol + S-adenosyl-L-homocysteine + H(+). Its pathway is cofactor biosynthesis; ubiquinone biosynthesis. In terms of biological role, O-methyltransferase that catalyzes the 2 O-methylation steps in the ubiquinone biosynthetic pathway. In Salmonella choleraesuis (strain SC-B67), this protein is Ubiquinone biosynthesis O-methyltransferase.